The chain runs to 146 residues: 3-dehydroquinate dehydratase (146 aa).

The active-site Proton acceptor is Tyr-22. Substrate contacts are provided by Asn-73, His-79, and Asp-86. His-99 serves as the catalytic Proton donor. Substrate-binding positions include 100–101 (LS) and Arg-110.

This sequence belongs to the type-II 3-dehydroquinase family. Homododecamer.

It carries out the reaction 3-dehydroquinate = 3-dehydroshikimate + H2O. It functions in the pathway metabolic intermediate biosynthesis; chorismate biosynthesis; chorismate from D-erythrose 4-phosphate and phosphoenolpyruvate: step 3/7. Catalyzes a trans-dehydration via an enolate intermediate. The chain is 3-dehydroquinate dehydratase from Synechococcus sp. (strain CC9902).